The chain runs to 270 residues: Undecaprenyl-diphosphatase 1 (270 aa).

The next 6 membrane-spanning stretches (helical) occupy residues Ile-41–Val-61, Phe-88–Phe-108, Lys-117–Ile-137, Phe-192–Ile-212, Leu-218–Phe-238, and Gly-250–Ala-270.

It belongs to the UppP family.

It localises to the cell membrane. The catalysed reaction is di-trans,octa-cis-undecaprenyl diphosphate + H2O = di-trans,octa-cis-undecaprenyl phosphate + phosphate + H(+). Its function is as follows. Catalyzes the dephosphorylation of undecaprenyl diphosphate (UPP). Confers resistance to bacitracin. This chain is Undecaprenyl-diphosphatase 1, found in Bacillus licheniformis (strain ATCC 14580 / DSM 13 / JCM 2505 / CCUG 7422 / NBRC 12200 / NCIMB 9375 / NCTC 10341 / NRRL NRS-1264 / Gibson 46).